A 353-amino-acid chain; its full sequence is Rhodopsin (353 aa).

Over 1 to 36 (MNGTEGPYFYVPMVNTSGIVRSPYEYPQYYLVNPAA) the chain is Extracellular. 2 N-linked (GlcNAc...) asparagine glycosylation sites follow: Asn-2 and Asn-15. Residues 37–61 (YAALGAYMFLLILVGFPINFLTLYV) traverse the membrane as a helical segment. The Cytoplasmic segment spans residues 62-73 (TIEHKKLRTPLN). The helical transmembrane segment at 74–96 (YILLNLAVADLFMVFGGFTTTMY) threads the bilayer. The Extracellular portion of the chain corresponds to 97–110 (TSMHGYFVLGRLGC). The cysteines at positions 110 and 187 are disulfide-linked. Residues 111–133 (NIEGFFATLGGEIALWSLVVLAI) traverse the membrane as a helical segment. The short motif at 134 to 136 (ERW) is the 'Ionic lock' involved in activated form stabilization element. Residues 134 to 152 (ERWVVVCKPISNFRFGENH) are Cytoplasmic-facing. Residues 153–173 (AIMGLAFTWLMAMACAAPPLV) form a helical membrane-spanning segment. Topologically, residues 174–202 (GWSRYIPEGMQCSCGIDYYTRAEGFNNES) are extracellular. N-linked (GlcNAc...) asparagine glycosylation is present at Asn-200. A helical transmembrane segment spans residues 203 to 224 (FVIYMFVCHFLIPLMVVFFCYG). Residues 225-252 (RLLCAVKEAAAAQQESETTQRAEREVTR) lie on the Cytoplasmic side of the membrane. Residues 253–274 (MVVIMVIAFLICWCPYAGVAWW) traverse the membrane as a helical segment. The Extracellular segment spans residues 275-286 (IFTHQGSDFGPV). The helical transmembrane segment at 287–308 (FMTIPAFFAKSSSIYNPMIYIC) threads the bilayer. Lys-296 carries the N6-(retinylidene)lysine modification. At 309–353 (LNKQFRHCMITTLCCGKNPFEEEEGASTASKTEASSVSSSSVSPA) the chain is on the cytoplasmic side. 2 S-palmitoyl cysteine lipidation sites follow: Cys-322 and Cys-323. The tract at residues 331-353 (EEGASTASKTEASSVSSSSVSPA) is disordered. Residues 334–353 (ASTASKTEASSVSSSSVSPA) show a composition bias toward low complexity.

Belongs to the G-protein coupled receptor 1 family. Opsin subfamily. In terms of processing, phosphorylated on some or all of the serine and threonine residues present in the C-terminal region. Post-translationally, contains one covalently linked retinal chromophore.

The protein localises to the membrane. It is found in the cell projection. The protein resides in the cilium. It localises to the photoreceptor outer segment. Photoreceptor required for image-forming vision at low light intensity. While most salt water fish species use retinal as chromophore, most freshwater fish use 3-dehydroretinal, or a mixture of retinal and 3-dehydroretinal. Light-induced isomerization of 11-cis to all-trans retinal triggers a conformational change that activates signaling via G-proteins. Subsequent receptor phosphorylation mediates displacement of the bound G-protein alpha subunit by arrestin and terminates signaling. This is Rhodopsin (rho) from Lithognathus mormyrus (Striped seabream).